A 299-amino-acid chain; its full sequence is Bifunctional protein FolD (299 aa).

NADP(+) contacts are provided by residues Gly168–Ser170, Ser193, and Ile234.

This sequence belongs to the tetrahydrofolate dehydrogenase/cyclohydrolase family. In terms of assembly, homodimer.

The enzyme catalyses (6R)-5,10-methylene-5,6,7,8-tetrahydrofolate + NADP(+) = (6R)-5,10-methenyltetrahydrofolate + NADPH. It carries out the reaction (6R)-5,10-methenyltetrahydrofolate + H2O = (6R)-10-formyltetrahydrofolate + H(+). Its pathway is one-carbon metabolism; tetrahydrofolate interconversion. Catalyzes the oxidation of 5,10-methylenetetrahydrofolate to 5,10-methenyltetrahydrofolate and then the hydrolysis of 5,10-methenyltetrahydrofolate to 10-formyltetrahydrofolate. The sequence is that of Bifunctional protein FolD from Brucella abortus (strain S19).